The following is a 997-amino-acid chain: Burkholderia TALE-like protein 2 (997 aa).

Residues 19–50 form a Cryptic repeat -1 repeat; that stretch reads LSPLERIKIEKHYGGGATLAFISNQHDELAQV. The stretch at 51–83 is one Cryptic repeat 0 repeat; that stretch reads LSRADILKIASYDCAAQALQAVLDCGPMLGKRG. Core repeat repeat units follow at residues 84-116, 117-147, 148-180, 181-213, 214-244, 245-277, 278-310, 311-343, 344-376, 377-409, 410-442, 443-475, 476-508, 509-539, 540-572, 573-605, 606-638, 639-671, 672-704, 705-737, 738-770, 771-803, 804-836, 837-869, 870-902, 903-935, and 936-967; these read FSRADIVRIAGNGGGAQALYSVLDVEPTLGKRG, FSQVDVVKIAGGGAQALHTVLEIGPTLGERG, FSRGDIVTIAGNNGGAQALQAVLELEPTLRERG, FNQADIVKIAGNGGGAQALQAVLDVEPALGKRG, FSRVDIAKIAGGGAQALQAVLGLEPTLRKRG, FHPTDIIKIAGNNGGAQALQAVLDLELMLRERG, FSQADIVKMASNIGGAQALQAVLNLEPALCERG, FSQPDIVKMAGNSGGAQALQAVLDLELAFRERG, FSQADIVKMASNIGGAQALQAVLELEPALHERG, FSQANIVKMAGNSGGAQALQAVLDLELVFRERG, FSQPEIVEMAGNIGGAQALHTVLDLELAFRERG, VRQADIVKIVGNNGGAQALQAVFELEPTLRERG, FNQATIVKIAANGGGAQALYSVLDVEPTLDKRG, FSRVDIVKIAGGGAQALHTAFELEPTLRKRG, FNPTDIVKIAGNKGGAQALQAVLELEPALRERG, FNQATIVKMAGNAGGAQALYSVLDVEPALRERG, FSQPEIVKIAGNIGGAQALHTVLELEPTLHKRG, FNPTDIVKIAGNSGGAQALQAVLELEPAFRERG, FGQPDIVKMASNIGGAQALQAVLELEPALRERG, FSQPDIVEMAGNIGGAQALQAVLELEPAFRERG, FSQSDIVKIAGNIGGAQALQAVLELEPTLRESD, FRQADIVNIAGNDGSTQALKAVIEHGPRLRQRG, FNRASIVKIAGNSGGAQALQAVLKHGPTLDERG, FNLTNIVKIAGNGGGAQALKAVIEHGPTLQQRG, FNLTDIVEMAGKGGGAQALKAVLEHGPTLRQRG, FNLIDIVEMASNTGGAQALKTVLEHGPTLRQRD, and LSLIDIVEIASNGGAQALKAVLKYGPVLMQAG. Residues 84–967 form a buD domain region; sequence FSRADIVRIA…KYGPVLMQAG (884 aa). ANK repeat units lie at residues 772–801, 805–834, 838–867, and 871–900; these read RQADIVNIAGNDGSTQALKAVIEHGPRLRQ, NRASIVKIAGNSGGAQALQAVLKHGPTLDE, NLTNIVKIAGNGGGAQALKAVIEHGPTLQQ, and NLTDIVEMAGKGGGAQALKAVLEHGPTLRQ. The Cryptic repeat +1 repeat unit spans residues 968-997; the sequence is RSNEEIVHVAARRGGAGRIRKMVALLLERQ.

Belongs to the transcription activator-like effector (TALE) family. Bat subfamily.

Functionally, binds to DNA in a sequence-specific manner. The polypeptide is Burkholderia TALE-like protein 2 (Mycetohabitans rhizoxinica (strain DSM 19002 / CIP 109453 / HKI 454) (Paraburkholderia rhizoxinica)).